The following is a 537-amino-acid chain: 2-isopropylmalate synthase (537 aa).

The Pyruvate carboxyltransferase domain occupies 8–273; it reads IIIFDTTLRD…FLGRPVDSME (266 aa). The Mn(2+) site is built by aspartate 17, histidine 208, histidine 210, and asparagine 244. A regulatory domain region spans residues 408 to 537; sequence RLELVQVSCG…PSEPVLTSKN (130 aa).

This sequence belongs to the alpha-IPM synthase/homocitrate synthase family. LeuA type 1 subfamily. In terms of assembly, homodimer. Mn(2+) serves as cofactor.

The protein resides in the cytoplasm. The enzyme catalyses 3-methyl-2-oxobutanoate + acetyl-CoA + H2O = (2S)-2-isopropylmalate + CoA + H(+). It functions in the pathway amino-acid biosynthesis; L-leucine biosynthesis; L-leucine from 3-methyl-2-oxobutanoate: step 1/4. Catalyzes the condensation of the acetyl group of acetyl-CoA with 3-methyl-2-oxobutanoate (2-ketoisovalerate) to form 3-carboxy-3-hydroxy-4-methylpentanoate (2-isopropylmalate). The polypeptide is 2-isopropylmalate synthase (Crocosphaera subtropica (strain ATCC 51142 / BH68) (Cyanothece sp. (strain ATCC 51142))).